Consider the following 286-residue polypeptide: ATP synthase gamma chain (286 aa).

This sequence belongs to the ATPase gamma chain family. In terms of assembly, F-type ATPases have 2 components, CF(1) - the catalytic core - and CF(0) - the membrane proton channel. CF(1) has five subunits: alpha(3), beta(3), gamma(1), delta(1), epsilon(1). CF(0) has three main subunits: a, b and c.

Its subcellular location is the cell inner membrane. Its function is as follows. Produces ATP from ADP in the presence of a proton gradient across the membrane. The gamma chain is believed to be important in regulating ATPase activity and the flow of protons through the CF(0) complex. The polypeptide is ATP synthase gamma chain (Shewanella baltica (strain OS223)).